Here is a 211-residue protein sequence, read N- to C-terminus: Thymidylate kinase (211 aa).

Residue 10 to 17 (GPDGAGKT) participates in ATP binding.

This sequence belongs to the thymidylate kinase family.

The enzyme catalyses dTMP + ATP = dTDP + ADP. In terms of biological role, phosphorylation of dTMP to form dTDP in both de novo and salvage pathways of dTTP synthesis. The polypeptide is Thymidylate kinase (Lactococcus lactis subsp. cremoris (strain SK11)).